The following is a 312-amino-acid chain: Malate dehydrogenase (312 aa).

NAD(+)-binding positions include 12–17 and Asp36; that span reads GAGFTG. Arg87 and Arg93 together coordinate substrate. NAD(+)-binding positions include Asn100 and 123 to 125; that span reads LTN. Asn125 serves as a coordination point for substrate. Ser149 is modified (phosphoserine). Substrate is bound at residue Arg156. His180 functions as the Proton acceptor in the catalytic mechanism.

Belongs to the LDH/MDH superfamily. MDH type 3 family.

It carries out the reaction (S)-malate + NAD(+) = oxaloacetate + NADH + H(+). Catalyzes the reversible oxidation of malate to oxaloacetate. This chain is Malate dehydrogenase, found in Bacillus anthracis (strain A0248).